The primary structure comprises 520 residues: Translation initiation factor IF3-1, mitochondrial (520 aa).

A mitochondrion-targeting transit peptide spans 1–66 (MAIWRIINRS…SNIFQNLRFL (66 aa)). Residues 271-282 (ARVKEESPKPDS) show a composition bias toward basic and acidic residues. Residues 271-520 (ARVKEESPKP…YGIFSTPKTK (250 aa)) form a disordered region. Residues 336–361 (EPQSPNQHVNPQRPRFSNQAPNQQPT) are compositionally biased toward polar residues. Pro residues predominate over residues 369 to 379 (PNQPPSAPRPQ). Polar residues-rich tracts occupy residues 404–422 (NQAPNQQSTGRFNPQFPNQ) and 458–468 (FQNQAPNQQPT). A compositionally biased stretch (pro residues) spans 473–485 (PQPPNPPRAPPRP).

The protein belongs to the IF-3 family. Monomer.

The protein resides in the mitochondrion. Its function is as follows. IF-3 binds to the 30S ribosomal subunit and shifts the equilibrium between 70S ribosomes and their 50S and 30S subunits in favor of the free subunits, thus enhancing the availability of 30S subunits on which protein synthesis initiation begins. The polypeptide is Translation initiation factor IF3-1, mitochondrial (Arabidopsis thaliana (Mouse-ear cress)).